Reading from the N-terminus, the 350-residue chain is Cytochrome c biogenesis protein CcsA (350 aa).

8 consecutive transmembrane segments (helical) span residues 23–43 (NVAFAISLGAMLFYWGGAAFP), 47–67 (LLAELGLAGMIGANLTMAALL), 82–102 (LYESLFFLAWGITALHLLALH), 108–128 (WVGVMTAPVVTGIVAFAALVL), 153–173 (VMLLAYAALLVGSLLSISFLI), 258–278 (LIGLGFPLLTIGIIAGAVWAN), 293–313 (WALITWLVFAAYLHARITKGW), and 319–339 (ALLASLGFGVVWVCYLGVNFL).

This sequence belongs to the CcmF/CycK/Ccl1/NrfE/CcsA family. May interact with ccs1.

The protein resides in the cellular thylakoid membrane. Required during biogenesis of c-type cytochromes (cytochrome c6 and cytochrome f) at the step of heme attachment. The sequence is that of Cytochrome c biogenesis protein CcsA from Synechococcus sp. (strain JA-2-3B'a(2-13)) (Cyanobacteria bacterium Yellowstone B-Prime).